Here is a 169-residue protein sequence, read N- to C-terminus: uncharacterized protein (169 aa).

A helical transmembrane segment spans residues 10-30 (YFVTILIIIIIILIVLLIVFL). Residues 98 to 123 (QSKPINKNNQQTKNTPTPLDDRPDLS) form a disordered region. Positions 100 to 115 (KPINKNNQQTKNTPTP) are enriched in low complexity.

It is found in the membrane. This is an uncharacterized protein from Acanthamoeba polyphaga (Amoeba).